Consider the following 94-residue polypeptide: Sucrose operon repressor (94 aa).

The HTH lacI-type domain occupies 1–56; sequence MASLHDVARLAGVSKSTVSRVINDEYGVKEATKQKVRQAVAECGYVPNQVAKDLKE. A DNA-binding region (H-T-H motif) is located at residues 4-23; the sequence is LHDVARLAGVSKSTVSRVIN.

In terms of biological role, repressor for the scr operon. Binds D-fructose as an inducer. The polypeptide is Sucrose operon repressor (scrR) (Vibrio alginolyticus).